The sequence spans 179 residues: Centromere protein R (179 aa).

The segment at 1 to 79 is disordered; the sequence is MSAKRSLKLD…RLSRRGQPQT (79 aa). The span at 30 to 50 shows a compositional bias: polar residues; it reads NSYSPTTGTCQISPFSSPTSH. Basic and acidic residues predominate over residues 51–64; it reads NAEDLRNGLSHGDE. The short motif at 172–176 is the LXXLL motif element; that stretch reads LQLLL.

The protein resides in the nucleus. Its subcellular location is the chromosome. It is found in the centromere. It localises to the kinetochore. Transcription coregulator that can have both coactivator and corepressor functions. Involved in the coactivation of nuclear receptors for retinoid X (RXRs) and thyroid hormone (TRs) in a ligand-dependent fashion. Probable component of a centromeric complex involved in assembly of kinetochore proteins, mitotic progression and chromosome segregation. The polypeptide is Centromere protein R (CENPR) (Gallus gallus (Chicken)).